Reading from the N-terminus, the 230-residue chain is Urease accessory protein UreF (230 aa).

It belongs to the UreF family. UreD, UreF and UreG form a complex that acts as a GTP-hydrolysis-dependent molecular chaperone, activating the urease apoprotein by helping to assemble the nickel containing metallocenter of UreC. The UreE protein probably delivers the nickel.

It localises to the cytoplasm. Required for maturation of urease via the functional incorporation of the urease nickel metallocenter. This Marinomonas sp. (strain MWYL1) protein is Urease accessory protein UreF.